The following is a 32-amino-acid chain: Dermatoxin-J2 (32 aa).

Q32 bears the Glutamine amide mark.

As to expression, expressed by the skin glands.

The protein resides in the secreted. Functionally, antimicrobial peptide. This chain is Dermatoxin-J2, found in Phasmahyla jandaia (Jandaia leaf frog).